The chain runs to 470 residues: E3 SUMO-protein ligase EGR2 (470 aa).

Positions Pro-126 to Pro-141 are enriched in low complexity. 3 disordered regions span residues Pro-126 to Thr-153, Pro-159 to Thr-178, and Asp-184 to Pro-211. Lys-247 carries the N6-acetyllysine; by EP300 modification. Positions Gly-275 to Cys-344 are disordered. The span at Thr-281–Gly-291 shows a compositional bias: gly residues. C2H2-type zinc fingers lie at residues Tyr-337–His-361, Phe-367–His-389, and Phe-395–His-417. The interval Asp-408–Pro-470 is disordered. Residues Arg-412 to Glu-422 show a composition bias toward basic residues. A compositionally biased stretch (low complexity) spans Ser-426–Ser-439. The span at Gly-440–Leu-450 shows a compositional bias: gly residues.

It belongs to the EGR C2H2-type zinc-finger protein family. As to quaternary structure, interacts with HCFC1. Interacts with WWP2. Interacts with UBC9. Interacts with CITED1. Interacts (via phosphorylated form) with SFN. Ubiquitinated by WWP2 leading to proteasomal degradation. Post-translationally, acetylated at Lys-247. May be deacetylated by HDAC6, HDAC10 or SIRT1.

Its subcellular location is the nucleus. Its pathway is protein modification; protein sumoylation. In terms of biological role, sequence-specific DNA-binding transcription factor. Plays a role in hindbrain segmentation by regulating the expression of a subset of homeobox containing genes and in Schwann cell myelination by regulating the expression of genes involved in the formation and maintenance of myelin. Binds to two EGR2-consensus sites EGR2A (5'-CTGTAGGAG-3') and EGR2B (5'-ATGTAGGTG-3') in the HOXB3 enhancer and promotes HOXB3 transcriptional activation. Binds to specific DNA sites located in the promoter region of HOXA4, HOXB2 and ERBB2. Regulates hindbrain segmentation by controlling the expression of Hox genes, such as HOXA4, HOXB3 and HOXB2, and thereby specifying odd and even rhombomeres. Promotes the expression of HOXB3 in the rhombomere r5 in the hindbrain. Regulates myelination in the peripheral nervous system after birth, possibly by regulating the expression of myelin proteins, such as MPZ, and by promoting the differentiation of Schwann cells. Involved in the development of the jaw openener musculature, probably by playing a role in its innervation through trigeminal motor neurons. May play a role in adipogenesis, possibly by regulating the expression of CEBPB. Its function is as follows. E3 SUMO-protein ligase helping SUMO1 conjugation to its coregulators NAB1 and NAB2, whose sumoylation down-regulates EGR2 transcriptional activity. The sequence is that of E3 SUMO-protein ligase EGR2 (Egr2) from Rattus norvegicus (Rat).